Consider the following 328-residue polypeptide: Acyl-CoA wax alcohol acyltransferase 1 (328 aa).

Transmembrane regions (helical) follow at residues 12–32 and 34–53; these read SLML…LQPL and VYLL…AWLF.

The protein belongs to the diacylglycerol acyltransferase family. In terms of tissue distribution, predominantly expressed in skin, where it is limited to the sebaceous gland. Expressed in more mature, centrally located cells just before their rupture and sebum release. Also expressed in all tissues except spleen. Expressed at higher level in thymus, prostate and testis.

The protein localises to the endoplasmic reticulum membrane. The catalysed reaction is a long chain fatty alcohol + a fatty acyl-CoA = a wax ester + CoA. The enzyme catalyses 1,2-di-(9Z-octadecenoyl)-sn-glycerol + (9Z)-octadecenoyl-CoA = 1,2,3-tri-(9Z-octadecenoyl)-glycerol + CoA. It catalyses the reaction hexadecan-1-ol + (9Z)-octadecenoyl-CoA = hexadecanyl (9Z)-octadecenoate + CoA. It carries out the reaction decan-1-ol + (9Z)-octadecenoyl-CoA = 1-O-decyl-(9Z)-octadecenoate + CoA. The catalysed reaction is (9Z)-hexadecen-1-ol + (9Z)-octadecenoyl-CoA = 1-O-(9Z)-hexadecenyl (9Z)-octadecenoate + CoA. The enzyme catalyses octadecan-1-ol + (9Z)-octadecenoyl-CoA = 1-O-octadecyl (9Z)-octadecenoate + CoA. It catalyses the reaction (9Z)-octadecen-1-ol + (9Z)-octadecenoyl-CoA = 1-O-(9Z)-octadecenyl (9Z)-octadecenoate + CoA. It carries out the reaction hexadecan-1-ol + hexadecanoyl-CoA = hexadecanyl hexadecanoate + CoA. The catalysed reaction is hexadecan-1-ol + (9Z)-hexadecenoyl-CoA = 1-O-hexadecyl (9Z)-hexadecenoate + CoA. The enzyme catalyses hexadecan-1-ol + octadecanoyl-CoA = hexadecanyl octadecanoate + CoA. It catalyses the reaction eicosan-1-ol + (9Z)-octadecenoyl-CoA = 1-O-eicosanyl (9Z)-octadecenoate + CoA. In terms of biological role, acyltransferase that catalyzes the formation of ester bonds between fatty alcohols and fatty acyl-CoAs to form wax monoesters. Shows a strong preference for decyl alcohol (C10), with less activity towards C16 and C18 alcohols. Shows a strong preference for saturated acyl-CoAs. The protein is Acyl-CoA wax alcohol acyltransferase 1 (AWAT1) of Homo sapiens (Human).